Consider the following 245-residue polypeptide: Phycocyanobilin:ferredoxin oxidoreductase (245 aa).

It belongs to the HY2 family.

The catalysed reaction is (2R,3Z)-phycocyanobilin + 4 oxidized [2Fe-2S]-[ferredoxin] = biliverdin IXalpha + 4 reduced [2Fe-2S]-[ferredoxin] + 4 H(+). In terms of biological role, catalyzes the four-electron reduction of biliverdin IX-alpha (2-electron reduction at both the A and D rings); the reaction proceeds via an isolatable 2-electron intermediate, 181,182-dihydrobiliverdin. This is Phycocyanobilin:ferredoxin oxidoreductase from Microcystis aeruginosa (strain NIES-843 / IAM M-2473).